Here is a 274-residue protein sequence, read N- to C-terminus: MGHMVNANYQIDEFVNLGANSIETDVSFDSSANPEYTYHGVPCDCRRWCKKWEYFNNFLKALRKATTPGDSKYHEKLVLVVFDLKAGSLYDNQAYDAGKKLAKNLLQHYWNNGNNGGRAYIVLSIPNLAHYKLITGFKETLKTEGHPELMEKVGYDFSGNDSIDQVANAYKKAGVTGRVWQSDGITNCVASFIRGLDRAKKAVKNRDSSNGYINKVYYWTVDKYATTREALDIGVDGIMTNYPDVIANVLNESAYKEKFRLATYDDNPWETFKN.

His-3 is an active-site residue. The Mg(2+) site is built by Glu-23 and Asp-25. The active-site Nucleophile is His-39. Disulfide bonds link Cys-43/Cys-49 and Cys-45/Cys-188. A Mg(2+)-binding site is contributed by Asp-83. An N-linked (GlcNAc...) asparagine glycan is attached at Asn-251.

It belongs to the arthropod phospholipase D family. Class II subfamily. The cofactor is Mg(2+). Expressed by the venom gland.

It is found in the secreted. It catalyses the reaction an N-(acyl)-sphingosylphosphocholine = an N-(acyl)-sphingosyl-1,3-cyclic phosphate + choline. The catalysed reaction is an N-(acyl)-sphingosylphosphoethanolamine = an N-(acyl)-sphingosyl-1,3-cyclic phosphate + ethanolamine. It carries out the reaction a 1-acyl-sn-glycero-3-phosphocholine = a 1-acyl-sn-glycero-2,3-cyclic phosphate + choline. The enzyme catalyses a 1-acyl-sn-glycero-3-phosphoethanolamine = a 1-acyl-sn-glycero-2,3-cyclic phosphate + ethanolamine. Its function is as follows. Dermonecrotic toxins cleave the phosphodiester linkage between the phosphate and headgroup of certain phospholipids (sphingolipid and lysolipid substrates), forming an alcohol (often choline) and a cyclic phosphate. This toxin acts on sphingomyelin (SM). It may also act on ceramide phosphoethanolamine (CPE), lysophosphatidylcholine (LPC) and lysophosphatidylethanolamine (LPE), but not on lysophosphatidylserine (LPS), and lysophosphatidylglycerol (LPG). It acts by transphosphatidylation, releasing exclusively cyclic phosphate products as second products. Induces dermonecrosis, hemolysis, increased vascular permeability, edema, inflammatory response, and platelet aggregation. This is Dermonecrotic toxin LarSicTox-alphaIB2bii from Loxosceles arizonica (Arizona brown spider).